Reading from the N-terminus, the 400-residue chain is Enoyl-[acyl-carrier-protein] reductase [NADH] (400 aa).

NAD(+)-binding positions include Gly48–Tyr53, Phe74–Glu75, Asp111–Ala112, and Leu139–Ala140. Tyr225 contacts substrate. The active-site Proton donor is the Tyr235. NAD(+) is bound by residues Lys244 and Val273–Thr275.

Belongs to the TER reductase family. Monomer.

It carries out the reaction a 2,3-saturated acyl-[ACP] + NAD(+) = a (2E)-enoyl-[ACP] + NADH + H(+). It participates in lipid metabolism; fatty acid biosynthesis. Involved in the final reduction of the elongation cycle of fatty acid synthesis (FAS II). Catalyzes the reduction of a carbon-carbon double bond in an enoyl moiety that is covalently linked to an acyl carrier protein (ACP). This chain is Enoyl-[acyl-carrier-protein] reductase [NADH], found in Burkholderia cenocepacia (strain HI2424).